Consider the following 347-residue polypeptide: F-box protein At2g14500 (347 aa).

The region spanning 6 to 52 is the F-box domain; that stretch reads PLTLSELPHDLLRNIFNRLSFADFHRATWNSISKQTAPPKTKSPWLI.

This is F-box protein At2g14500 from Arabidopsis thaliana (Mouse-ear cress).